The following is a 1054-amino-acid chain: Reverse gyrase (1054 aa).

The RG N-terminal-type zinc-finger motif lies at 1 to 43 (MIPVVYSNLCPVCGGDLESKEIEKHVCFRKKRSLCLFPEDFLL). 4 residues coordinate Zn(2+): C10, C13, C27, and C35. C35 and C650 are disulfide-bonded. ATP is bound by residues Q61, K84, T85, and S86. One can recognise a Helicase ATP-binding domain in the interval 65 to 245 (AKRILRKESF…FRQLLNFDIG (181 aa)). The DEAD box signature appears at 182–185 (DDVD). The segment at 352-427 (PSFRVTIEDI…EGEVIFPDLR (76 aa)) is latch region. The topoisomerase I stretch occupies residues 502–1054 (DLIKPALFIV…DLYAEIKSID (553 aa)). Residues 506–662 (PALFIVESPT…VKRAEFHEVT (157 aa)) form the Toprim domain. Position 512 (E512) interacts with Mg(2+). An RG C-terminal-type zinc finger spans residues 581 to 609 (IKRCRDCGYQFTEDRESCPKCGSENVDNS). Residues C584, C587, C598, and C601 each coordinate Zn(2+). D631 contributes to the Mg(2+) binding site. The region spanning 677–1054 (DENLVKAQVV…DLYAEIKSID (378 aa)) is the Topo IA-type catalytic domain. Y809 functions as the O-(5'-phospho-DNA)-tyrosine intermediate in the catalytic mechanism.

The protein in the N-terminal section; belongs to the DEAD box helicase family. DDVD subfamily. This sequence in the C-terminal section; belongs to the type IA topoisomerase family. In terms of assembly, monomer. It depends on Zn(2+) as a cofactor. The cofactor is Mg(2+).

It localises to the cytoplasm. It carries out the reaction ATP + H2O = ADP + phosphate + H(+). Modifies the topological state of DNA by introducing positive supercoils in an ATP-dependent process, increasing the linking number in steps of +1. Very efficient supercoiling occurs on relaxed DNA with a single-stranded bubble; the minimal bubble is 20 nucleotides (nt) and up to 10 positive supercoils can be introduced into a 3.1 kb plasmid with a 50 nt bubble. Positively supercoils DNA with all (d)NTPS, although it requires about 10-fold more of non-(d)ATP. In the absence of ATP (or at low levels of enzyme), or in the presence of ADP, relaxes negative supercoils. Only relaxes positive supercoils when the substrate contains a bubble. Also promotes strand annealing of complementary ssDNA circles. Binds to single-stranded DNA, transiently cleaves and then rejoins the ends, introducing a positive supercoil in the process. The scissile phosphodiester is attacked by the catalytic tyrosine of the enzyme, resulting in the formation of a DNA-(5'-phosphotyrosyl)-enzyme intermediate. Probably involved in rewinding DNA strands in regions of the chromosome that have opened up to allow replication, transcription, DNA repair and/or for DNA protection. Functionally, in vitro protects DNA against degradation at 90 degrees Celsius, reducing dsDNA breakage about 8-fold; ATP hydrolysis is not necessary, while ADP decreases the protection somewhat. Coats all forms of dsDNA; the DNA is protected against cleavage and transcription. Recognizes nicked DNA and forms a coat at the nicking site, which may help hold DNA in a structure amenable to repair. The polypeptide is Reverse gyrase (Archaeoglobus fulgidus (strain ATCC 49558 / DSM 4304 / JCM 9628 / NBRC 100126 / VC-16)).